Here is a 369-residue protein sequence, read N- to C-terminus: Glutamate 5-kinase (369 aa).

K14 contributes to the ATP binding site. Substrate is bound by residues S56, D143, and N155. ATP contacts are provided by residues 175–176 (SD) and 215–221 (TGGMASK). The PUA domain occupies 277 to 351 (AGKIRLDQGA…GMKTQELPDD (75 aa)).

This sequence belongs to the glutamate 5-kinase family.

It is found in the cytoplasm. It catalyses the reaction L-glutamate + ATP = L-glutamyl 5-phosphate + ADP. It functions in the pathway amino-acid biosynthesis; L-proline biosynthesis; L-glutamate 5-semialdehyde from L-glutamate: step 1/2. In terms of biological role, catalyzes the transfer of a phosphate group to glutamate to form L-glutamate 5-phosphate. In Corynebacterium efficiens (strain DSM 44549 / YS-314 / AJ 12310 / JCM 11189 / NBRC 100395), this protein is Glutamate 5-kinase.